Here is a 439-residue protein sequence, read N- to C-terminus: Ribosomal protein uS12 methylthiotransferase RimO (439 aa).

In terms of domain architecture, MTTase N-terminal spans S2–N114. Residues C11, C45, C77, C146, C150, and C153 each coordinate [4Fe-4S] cluster. Residues T132–E363 enclose the Radical SAM core domain.

This sequence belongs to the methylthiotransferase family. RimO subfamily. It depends on [4Fe-4S] cluster as a cofactor.

The protein resides in the cytoplasm. It carries out the reaction L-aspartate(89)-[ribosomal protein uS12]-hydrogen + (sulfur carrier)-SH + AH2 + 2 S-adenosyl-L-methionine = 3-methylsulfanyl-L-aspartate(89)-[ribosomal protein uS12]-hydrogen + (sulfur carrier)-H + 5'-deoxyadenosine + L-methionine + A + S-adenosyl-L-homocysteine + 2 H(+). Functionally, catalyzes the methylthiolation of an aspartic acid residue of ribosomal protein uS12. This is Ribosomal protein uS12 methylthiotransferase RimO from Campylobacter jejuni subsp. jejuni serotype O:6 (strain 81116 / NCTC 11828).